Here is a 521-residue protein sequence, read N- to C-terminus: MLVVAFKPGHDGAVAAIDDRRLLYSLESEKDSRPRYSTLLPTTFLDIAERLGAIPDVVALGGWADLRPRGVVYTGAGYEGTQEPTVTTSRFFGKEVKFFTSTHERSHIYMALGMAPKDGAPLKSVLVWEGDVGAFYLVDSEHRIIRTIPVMTGPGARYSFLFGLADPTFPDTGGKPRLNDAGKLMALAAFGDSADASPDIRHVVERVLKQDSMYPAPKAEYRDSVLHNAGVESEECKIAAALLTERLFETFAEVARRELPEGTPLYISGGCGLNCDWNSQWAQLGHFSSVFVAPCTNDSGSALGTAIDALTTFTGDPHIDWNVYSGLEFVHDTRPDPARWESVPLDHAALSSALAAGRVVAWVQGRWEIGPRALGNRSLLAEAFSSASRDRLNTVKMREDYRPIAPVCRVEDLGKVFHEDFEDPHMLYFRRVREESGVRAVTHVDGSARCQTVTGTSNPELHRLLSVFAQGQGLGVLCNTSLNFNGDGFINRMSDLVRYCEWREIQDMVVGDTWYRRIAGS.

Belongs to the NodU/CmcH family.

The protein operates within antibiotic biosynthesis; cephamycin C biosynthesis. Functionally, catalyzes the carbamoylation reaction in the cephamycin biosynthesis. The protein is 3'-hydroxymethylcephem-O-carbamoyltransferase (cmcH) of Streptomyces clavuligerus.